Reading from the N-terminus, the 116-residue chain is Mitochondrial import inner membrane translocase subunit PAM16 like 2 (116 aa).

The transit peptide at 1-27 directs the protein to the mitochondrion; sequence MAGRLLANLIVMGSGIIGRAVFQAYRQ. The J-like stretch occupies residues 57-106; sequence EARQILGVTEKTSWEEILQKYDKLFENNAKAGSFYLQSKVHRAKECLEVV.

This sequence belongs to the TIM16/PAM16 family. In terms of tissue distribution, expressed constitutively and ubiquitously, except in root tips, at low levels.

Its subcellular location is the mitochondrion inner membrane. It localises to the cytoplasm. Its function is as follows. Regulates ATP-dependent protein translocation into the mitochondrial matrix. Involved in the uptake of thaxtomin, a phytotoxin produced by Streptomyces bacteria, that causes dramatic cell swelling, reduced seedling growth, and inhibition of cellulose synthesis. Modulates polar auxin transport. Involved in importing a negative regulator of plant immunity into mitochondria, thus protecting plants from over-accumulation of reactive oxygen species (ROS) and preventing autoimmunity. Confers sensitivity to virulent pathogens such as the oomycete H.arabidopsidis Noco2 and the bacteria P.syringae pv. maculicola ES4326. The polypeptide is Mitochondrial import inner membrane translocase subunit PAM16 like 2 (Arabidopsis thaliana (Mouse-ear cress)).